Consider the following 301-residue polypeptide: Probable alpha-L-glutamate ligase 2 (301 aa).

Positions 104–287 constitute an ATP-grasp domain; it reads LQLLSRKGIG…VTEPIVEYIE (184 aa). ATP-binding positions include lysine 141, 178-179, aspartate 187, and 211-213; these read EY and RSN. 3 residues coordinate Mg(2+): aspartate 248, glutamate 260, and asparagine 262. Residues aspartate 248, glutamate 260, and asparagine 262 each contribute to the Mn(2+) site.

This sequence belongs to the RimK family. It depends on Mg(2+) as a cofactor. Mn(2+) serves as cofactor.

The polypeptide is Probable alpha-L-glutamate ligase 2 (Shewanella baltica (strain OS195)).